Consider the following 430-residue polypeptide: Adenosylhomocysteinase (430 aa).

Substrate-binding residues include Thr56, Asp131, and Glu156. An NAD(+)-binding site is contributed by Thr157–Thr159. Residues Lys186 and Asp190 each coordinate substrate. NAD(+) is bound by residues Asn191, Gly220 to Gly225, Glu243, Asn278, Ile299 to His301, and Asn344.

It belongs to the adenosylhomocysteinase family. NAD(+) is required as a cofactor.

The protein resides in the cytoplasm. It catalyses the reaction S-adenosyl-L-homocysteine + H2O = L-homocysteine + adenosine. The protein operates within amino-acid biosynthesis; L-homocysteine biosynthesis; L-homocysteine from S-adenosyl-L-homocysteine: step 1/1. May play a key role in the regulation of the intracellular concentration of adenosylhomocysteine. The polypeptide is Adenosylhomocysteinase (Halorhodospira halophila (strain DSM 244 / SL1) (Ectothiorhodospira halophila (strain DSM 244 / SL1))).